A 167-amino-acid polypeptide reads, in one-letter code: Protein FimG (167 aa).

An N-terminal signal peptide occupies residues 1–23 (MKWCKRGYVLAAILALASATIQA). Cysteines 39 and 77 form a disulfide.

The protein belongs to the fimbrial protein family.

It localises to the fimbrium. In terms of biological role, involved in regulation of length and mediation of adhesion of type 1 fimbriae (but not necessary for the production of fimbriae). Involved in the integration of FimH in the fimbriae. This chain is Protein FimG (fimG), found in Escherichia coli (strain K12).